Here is a 150-residue protein sequence, read N- to C-terminus: Deoxyuridine 5'-triphosphate nucleotidohydrolase (150 aa).

Substrate-binding positions include 69–71 (RSG), Asn82, 86–88 (LID), and Met96.

Belongs to the dUTPase family. Mg(2+) is required as a cofactor.

The catalysed reaction is dUTP + H2O = dUMP + diphosphate + H(+). The protein operates within pyrimidine metabolism; dUMP biosynthesis; dUMP from dCTP (dUTP route): step 2/2. This enzyme is involved in nucleotide metabolism: it produces dUMP, the immediate precursor of thymidine nucleotides and it decreases the intracellular concentration of dUTP so that uracil cannot be incorporated into DNA. The sequence is that of Deoxyuridine 5'-triphosphate nucleotidohydrolase from Acinetobacter baumannii (strain AB307-0294).